The chain runs to 109 residues: Short-chain dehydrogenase/reductase homolog YusS (109 aa).

It belongs to the short-chain dehydrogenases/reductases (SDR) family.

The protein is Short-chain dehydrogenase/reductase homolog YusS (yusS) of Bacillus subtilis (strain 168).